Consider the following 381-residue polypeptide: ATP-dependent (S)-NAD(P)H-hydrate dehydratase (381 aa).

The region spanning 84 to 376 (AEAVVRRITP…EFLGKSLEDI (293 aa)) is the YjeF C-terminal domain. Residues glycine 197 and 250–256 (NVYEYKR) contribute to the (6S)-NADPHX site. ATP-binding positions include 290 to 294 (KGKAD) and 309 to 318 (GSPRRCGGQG). Aspartate 319 provides a ligand contact to (6S)-NADPHX.

Belongs to the NnrD/CARKD family. It depends on Mg(2+) as a cofactor.

The enzyme catalyses (6S)-NADHX + ATP = ADP + phosphate + NADH + H(+). It catalyses the reaction (6S)-NADPHX + ATP = ADP + phosphate + NADPH + H(+). Functionally, catalyzes the dehydration of the S-form of NAD(P)HX at the expense of ATP, which is converted to ADP. Together with NAD(P)HX epimerase, which catalyzes the epimerization of the S- and R-forms, the enzyme allows the repair of both epimers of NAD(P)HX, a damaged form of NAD(P)H that is a result of enzymatic or heat-dependent hydration. This chain is ATP-dependent (S)-NAD(P)H-hydrate dehydratase, found in Sorghum bicolor (Sorghum).